A 432-amino-acid chain; its full sequence is Uracil permease (432 aa).

12 helical membrane passes run 25 to 45 (LFAMFGATILVPYLVGLDPSI), 65 to 85 (VPAYLGSSFAYIAPIIAAKTA), 89 to 109 (GAAMIGSFLAGLVYGVVALII), 124 to 144 (VVVGPVIIVIGLGLAGTAVGM), 155 to 175 (LLHFSVALVTLAATIVCSVLA), 181 to 201 (LIPVLVGIVVGYLYALAVGLV), 206 to 226 (VAAAKWFEWPDFLIPFADYPV), 228 to 248 (VTWEIVMLMVPVAIVTLSEHI), 305 to 325 (VYSVYVLAGAAVIAIAFGFVG), 330 to 350 (LISSIPTPVMGGVSILLFGII), 370 to 390 (NLVIASVILVIGIGGAVLKIS), and 393 to 413 (FQITGMALSAIVGVLLNLILP).

This sequence belongs to the nucleobase:cation symporter-2 (NCS2) (TC 2.A.40) family.

It localises to the cell membrane. Transport of uracil in the cell. The chain is Uracil permease (pyrP) from Bacillus caldolyticus.